We begin with the raw amino-acid sequence, 480 residues long: Glutamyl-tRNA(Gln) amidotransferase subunit A (480 aa).

Residues Lys-79 and Ser-154 each act as charge relay system in the active site. The tract at residues 133–156 (NENSAYGPVRNPRDKSRVPGGSSG) is disordered. The Acyl-ester intermediate role is filled by Ser-178.

It belongs to the amidase family. GatA subfamily. As to quaternary structure, heterotrimer of A, B and C subunits.

It carries out the reaction L-glutamyl-tRNA(Gln) + L-glutamine + ATP + H2O = L-glutaminyl-tRNA(Gln) + L-glutamate + ADP + phosphate + H(+). Its function is as follows. Allows the formation of correctly charged Gln-tRNA(Gln) through the transamidation of misacylated Glu-tRNA(Gln) in organisms which lack glutaminyl-tRNA synthetase. The reaction takes place in the presence of glutamine and ATP through an activated gamma-phospho-Glu-tRNA(Gln). The protein is Glutamyl-tRNA(Gln) amidotransferase subunit A of Koribacter versatilis (strain Ellin345).